Consider the following 277-residue polypeptide: Shikimate dehydrogenase (NADP(+)) (277 aa).

Residues 15 to 17 and threonine 62 each bind shikimate; that span reads SLS. Lysine 66 acts as the Proton acceptor in catalysis. Shikimate is bound by residues asparagine 87 and aspartate 102. NADP(+)-binding positions include 127–131, 151–156, and isoleucine 219; these read GAGGA and NRTRDK. Shikimate is bound at residue tyrosine 221. Glycine 242 serves as a coordination point for NADP(+).

This sequence belongs to the shikimate dehydrogenase family. As to quaternary structure, homodimer.

The enzyme catalyses shikimate + NADP(+) = 3-dehydroshikimate + NADPH + H(+). Its pathway is metabolic intermediate biosynthesis; chorismate biosynthesis; chorismate from D-erythrose 4-phosphate and phosphoenolpyruvate: step 4/7. In terms of biological role, involved in the biosynthesis of the chorismate, which leads to the biosynthesis of aromatic amino acids. Catalyzes the reversible NADPH linked reduction of 3-dehydroshikimate (DHSA) to yield shikimate (SA). The polypeptide is Shikimate dehydrogenase (NADP(+)) (Bacillus mycoides (strain KBAB4) (Bacillus weihenstephanensis)).